Consider the following 350-residue polypeptide: Dihydroorotase (350 aa).

Zn(2+)-binding residues include histidine 17 and histidine 19. Residues 19–21 (HLR) and asparagine 45 contribute to the substrate site. Positions 103, 140, and 178 each coordinate Zn(2+). Lysine 103 carries the post-translational modification N6-carboxylysine. Residue histidine 140 participates in substrate binding. Leucine 224 is a binding site for substrate. Aspartate 252 lines the Zn(2+) pocket. Residue aspartate 252 is part of the active site. Residues histidine 256 and alanine 268 each contribute to the substrate site.

Belongs to the metallo-dependent hydrolases superfamily. DHOase family. Class II DHOase subfamily. In terms of assembly, homodimer. Zn(2+) is required as a cofactor.

The enzyme catalyses (S)-dihydroorotate + H2O = N-carbamoyl-L-aspartate + H(+). Its pathway is pyrimidine metabolism; UMP biosynthesis via de novo pathway; (S)-dihydroorotate from bicarbonate: step 3/3. Its function is as follows. Catalyzes the reversible cyclization of carbamoyl aspartate to dihydroorotate. This Buchnera aphidicola subsp. Acyrthosiphon pisum (strain APS) (Acyrthosiphon pisum symbiotic bacterium) protein is Dihydroorotase.